We begin with the raw amino-acid sequence, 122 residues long: Conotoxin flf14c (122 aa).

A signal peptide spans 1–22 (MGFRVLVLIVMVTTSALPFTFS). Residues 23 to 96 (EESGRSPFRP…AESPVGQKRW (74 aa)) constitute a propeptide that is removed on maturation. The disordered stretch occupies residues 53-89 (RADGQTPDMHQPEMRRPEMRRPEVRRPEVRQPEFAES). The span at 62–85 (HQPEMRRPEMRRPEVRRPEVRQPE) shows a compositional bias: basic and acidic residues. 2 cysteine pairs are disulfide-bonded: cysteine 101–cysteine 121 and cysteine 105–cysteine 117.

As to expression, expressed by the venom duct.

It localises to the secreted. This chain is Conotoxin flf14c, found in Conus anabathrum floridanus (Florida cone).